Reading from the N-terminus, the 178-residue chain is Large ribosomal subunit protein uL6 (178 aa).

This sequence belongs to the universal ribosomal protein uL6 family. In terms of assembly, part of the 50S ribosomal subunit.

In terms of biological role, this protein binds to the 23S rRNA, and is important in its secondary structure. It is located near the subunit interface in the base of the L7/L12 stalk, and near the tRNA binding site of the peptidyltransferase center. The sequence is that of Large ribosomal subunit protein uL6 from Symbiobacterium thermophilum (strain DSM 24528 / JCM 14929 / IAM 14863 / T).